Here is a 436-residue protein sequence, read N- to C-terminus: GTPase Der (436 aa).

EngA-type G domains are found at residues 4–167 (PVVA…PKEE) and 176–351 (VKFS…DNHS). GTP contacts are provided by residues 10 to 17 (GRPNVGKS), 57 to 61 (DTGGI), 119 to 122 (NKVD), 182 to 189 (GRPNVGKS), 229 to 233 (DTAGM), and 294 to 297 (NKWD). The 85-residue stretch at 352 to 436 (LRVQSSMLND…PIRVIARKRK (85 aa)) folds into the KH-like domain.

This sequence belongs to the TRAFAC class TrmE-Era-EngA-EngB-Septin-like GTPase superfamily. EngA (Der) GTPase family. Associates with the 50S ribosomal subunit.

Functionally, GTPase that plays an essential role in the late steps of ribosome biogenesis. The sequence is that of GTPase Der from Listeria welshimeri serovar 6b (strain ATCC 35897 / DSM 20650 / CCUG 15529 / CIP 8149 / NCTC 11857 / SLCC 5334 / V8).